We begin with the raw amino-acid sequence, 262 residues long: Sulfur carrier protein FdhD (262 aa).

The active-site Cysteine persulfide intermediate is Cys-107.

The protein belongs to the FdhD family.

The protein localises to the cytoplasm. Its function is as follows. Required for formate dehydrogenase (FDH) activity. Acts as a sulfur carrier protein that transfers sulfur from IscS to the molybdenum cofactor prior to its insertion into FDH. The polypeptide is Sulfur carrier protein FdhD (Bacillus pumilus (strain SAFR-032)).